A 384-amino-acid polypeptide reads, in one-letter code: Outer membrane protein assembly factor BamC (384 aa).

An N-terminal signal peptide occupies residues 1–23 (MNKLNSVVVARGAVAVLLIGLAG). Cysteine 24 carries the N-palmitoyl cysteine lipid modification. A lipid anchor (S-diacylglycerol cysteine) is attached at cysteine 24. Disordered stretches follow at residues 47–70 (LEVPPDLTSPTRDDRYAVPDTSGK) and 251–273 (QAAQEKPLERAKMTRGPDGSGTL).

The protein belongs to the BamC family. Part of the Bam complex.

The protein resides in the cell outer membrane. Its function is as follows. Part of the outer membrane protein assembly complex, which is involved in assembly and insertion of beta-barrel proteins into the outer membrane. The sequence is that of Outer membrane protein assembly factor BamC from Accumulibacter regalis.